The sequence spans 457 residues: UDP-glycosyltransferase 708C1 (457 aa).

A UDP-alpha-D-glucose-binding site is contributed by Gly-31. His-32 (proton acceptor) is an active-site residue. His-32 is an an anthocyanidin binding site. Thr-34 lines the UDP-alpha-D-glucose pocket. Asn-94 provides a ligand contact to an anthocyanidin. Asp-129 acts as the Charge relay in catalysis. Thr-150 lines the UDP-alpha-D-glucose pocket. The tract at residues 279-280 is UDP; that stretch reads NR. UDP-alpha-D-glucose contacts are provided by Val-341, Gln-343, His-358, Trp-361, Asn-362, Ser-363, and Glu-366. Gly-381 contacts an anthocyanidin. 2 residues coordinate UDP-alpha-D-glucose: Asp-382 and Gln-383.

It belongs to the UDP-glycosyltransferase family. As to expression, expressed in cotyledons. Not detected in flowers, leaves, roots and hypocotyls.

The catalysed reaction is a 3'-hydro-2'-hydroxy-beta-oxodihydrochalcone + UDP-alpha-D-glucose = a 3'-(beta-D-glucopyranosyl)-2'-hydroxy-beta-oxodihydrochalcone + UDP + H(+). UDP-glucose-dependent glucosyltransferase catalyzing the C-glucosylation of 2-hydroxyflavanones (2-hydroxynaringenin, 2-hydroxyeriodictyol and 2-hydroxypinocembrin) and phloretin. No activity with flavanones, flavones or flavonols. Exhibits C-glycosylation activity toward 2',4',6'-trihydroxyacetophenone and phloretin using UDP-glucose as sugar donor. Can use UDP-galactose as sugar donor, but catalytic efficiency is 14-fold lower toward UDP-galactose than toward UDP-glucose. This Fagopyrum esculentum (Common buckwheat) protein is UDP-glycosyltransferase 708C1.